A 152-amino-acid polypeptide reads, in one-letter code: Serglycin (152 aa).

The first 25 residues, 1 to 25 (MQVPVGSRLVLALAFVLVWGSSVQG), serve as a signal peptide directing secretion. The propeptide at 26–74 (YPARRARYQWVRCKPNGFFANCIEEKGPQFDLIDESNNIGPPMNNPVLM) is activation peptide. Cysteine 38 and cysteine 47 are joined by a disulfide. The disordered stretch occupies residues 66-115 (PPMNNPVLMEGPSKDFISNYDDYGSGSGSGSGSGSGSGSGSGSGFLGDME). 10 repeat units span residues 89 to 90 (GS), 91 to 92 (GS), 93 to 94 (GS), 95 to 96 (GS), 97 to 98 (GS), 99 to 100 (GS), 101 to 102 (GS), 103 to 104 (GS), 105 to 106 (GS), and 107 to 108 (GS). The interval 89–108 (GSGSGSGSGSGSGSGSGSGS) is 10 X 2 AA tandem repeats of G-S. Positions 90 to 110 (SGSGSGSGSGSGSGSGSGSGF) are enriched in gly residues. O-linked (Xyl...) (glycosaminoglycan) serine glycosylation is found at serine 92 and serine 94. Serine 98, serine 100, serine 102, serine 104, serine 106, and serine 108 each carry an O-linked (Xyl...) (glycosaminoglycan) serine glycan.

This sequence belongs to the serglycin family. Binds to activated CD44 and to GZMB. In terms of processing, O-glycosylated; contains chondroitin sulfate and heparan sulfate.

Its subcellular location is the cytoplasmic granule. It is found in the cytolytic granule. The protein resides in the secreted. It localises to the extracellular space. The protein localises to the golgi apparatus. Plays a role in formation of mast cell secretory granules and mediates storage of various compounds in secretory vesicles. Required for storage of some proteases in both connective tissue and mucosal mast cells and for storage of granzyme B in T-lymphocytes. Plays a role in localizing neutrophil elastase in azurophil granules of neutrophils. Mediates processing of MMP2. Plays a role in cytotoxic cell granule-mediated apoptosis by forming a complex with granzyme B which is delivered to cells by perforin to induce apoptosis. Regulates the secretion of TNF-alpha and may also regulate protease secretion. Inhibits bone mineralization. The chain is Serglycin (Srgn) from Mus musculus (Mouse).